A 428-amino-acid polypeptide reads, in one-letter code: Lupus La protein homolog A (428 aa).

Residues 7–99 (KEQKLDSDTK…RRSPAKPLPE (93 aa)) enclose the HTH La-type RNA-binding domain. Positions 111–203 (KSVYIKGFPT…EERKLNKSEE (93 aa)) constitute an RRM domain. Disordered regions lie at residues 187–223 (EYHA…DAER) and 323–428 (QESF…VGDQ). Short sequence motifs (nuclear localization signal) lie at residues 196 to 212 (RKLN…QVKK) and 316 to 332 (KKIL…RKGR). One can recognise a xRRM domain in the interval 227-349 (EERVGSLLKF…KGRGGKGNDS (123 aa)). Basic residues-rich tracts occupy residues 328–343 (KRKG…KGRG) and 352–361 (RKRTQFQGKK). Acidic residues predominate over residues 366–377 (SSDDEDDMEESE). The segment covering 406–428 (RSLDDKAEDGPAVKQSKTEVGDQ) has biased composition (basic and acidic residues).

In terms of processing, phosphorylated.

Its subcellular location is the nucleus. Its function is as follows. La protein plays a role in the transcription of RNA polymerase III. It is most probably a transcription termination factor. Binds to the 3' termini of virtually all nascent polymerase III transcripts. The polypeptide is Lupus La protein homolog A (ssb-a) (Xenopus laevis (African clawed frog)).